A 131-amino-acid polypeptide reads, in one-letter code: D-ribose pyranase (131 aa).

His20 acts as the Proton donor in catalysis. Substrate is bound by residues Asp28, His98, and Tyr120–Asn122.

It belongs to the RbsD / FucU family. RbsD subfamily. Homodecamer.

It is found in the cytoplasm. It carries out the reaction beta-D-ribopyranose = beta-D-ribofuranose. It functions in the pathway carbohydrate metabolism; D-ribose degradation; D-ribose 5-phosphate from beta-D-ribopyranose: step 1/2. Catalyzes the interconversion of beta-pyran and beta-furan forms of D-ribose. The protein is D-ribose pyranase of Clostridium perfringens (strain ATCC 13124 / DSM 756 / JCM 1290 / NCIMB 6125 / NCTC 8237 / Type A).